Consider the following 287-residue polypeptide: Pantothenate synthetase (287 aa).

30-37 (MGNLHDGH) is a binding site for ATP. The active-site Proton donor is His-37. Gln-61 is a (R)-pantoate binding site. Gln-61 serves as a coordination point for beta-alanine. ATP is bound at residue 148–151 (GQKD). Gln-154 serves as a coordination point for (R)-pantoate. Residues Ile-177 and 185–188 (LSSR) each bind ATP.

This sequence belongs to the pantothenate synthetase family. As to quaternary structure, homodimer.

The protein localises to the cytoplasm. It catalyses the reaction (R)-pantoate + beta-alanine + ATP = (R)-pantothenate + AMP + diphosphate + H(+). The protein operates within cofactor biosynthesis; (R)-pantothenate biosynthesis; (R)-pantothenate from (R)-pantoate and beta-alanine: step 1/1. Its function is as follows. Catalyzes the condensation of pantoate with beta-alanine in an ATP-dependent reaction via a pantoyl-adenylate intermediate. This Psychrobacter cryohalolentis (strain ATCC BAA-1226 / DSM 17306 / VKM B-2378 / K5) protein is Pantothenate synthetase.